Here is a 358-residue protein sequence, read N- to C-terminus: Peptide chain release factor 1 (358 aa).

Q233 carries the post-translational modification N5-methylglutamine.

It belongs to the prokaryotic/mitochondrial release factor family. Methylated by PrmC. Methylation increases the termination efficiency of RF1.

Its subcellular location is the cytoplasm. Its function is as follows. Peptide chain release factor 1 directs the termination of translation in response to the peptide chain termination codons UAG and UAA. In Agathobacter rectalis (strain ATCC 33656 / DSM 3377 / JCM 17463 / KCTC 5835 / VPI 0990) (Eubacterium rectale), this protein is Peptide chain release factor 1.